A 345-amino-acid chain; its full sequence is Phosphoribosylformylglycinamidine cyclo-ligase (345 aa).

This sequence belongs to the AIR synthase family.

The protein localises to the cytoplasm. The enzyme catalyses 2-formamido-N(1)-(5-O-phospho-beta-D-ribosyl)acetamidine + ATP = 5-amino-1-(5-phospho-beta-D-ribosyl)imidazole + ADP + phosphate + H(+). It functions in the pathway purine metabolism; IMP biosynthesis via de novo pathway; 5-amino-1-(5-phospho-D-ribosyl)imidazole from N(2)-formyl-N(1)-(5-phospho-D-ribosyl)glycinamide: step 2/2. In Tolumonas auensis (strain DSM 9187 / NBRC 110442 / TA 4), this protein is Phosphoribosylformylglycinamidine cyclo-ligase.